Consider the following 191-residue polypeptide: Putative RNA-binding protein EEED8.4 (191 aa).

The 78-residue stretch at 55–132 (KSVFIGNVDF…RPIVVTAKRT (78 aa)) folds into the RRM domain. The segment at 136–160 (GMGHGVRGSSRGTFGRGRGAARGAP) is disordered.

This chain is Putative RNA-binding protein EEED8.4, found in Caenorhabditis elegans.